The primary structure comprises 196 residues: Guanylate kinase (196 aa).

The Guanylate kinase-like domain occupies 8–191 (GRLIVLTGPT…AAADLWSVIA (184 aa)). 15 to 22 (GPTAVGKG) is an ATP binding site.

This sequence belongs to the guanylate kinase family.

It localises to the cytoplasm. The catalysed reaction is GMP + ATP = GDP + ADP. In terms of biological role, essential for recycling GMP and indirectly, cGMP. This is Guanylate kinase from Bifidobacterium longum (strain NCC 2705).